A 50-amino-acid polypeptide reads, in one-letter code: Fungus-induced-related protein 15 (50 aa).

The signal sequence occupies residues 1–21 (MNFYSLFVFIALIFSFNVVHG).

May have role in hypoxia response. In Caenorhabditis elegans, this protein is Fungus-induced-related protein 15 (fipr-15).